Here is a 252-residue protein sequence, read N- to C-terminus: Ubiquinone biosynthesis protein COQ4 homolog 2, mitochondrial (252 aa).

Histidine 130, aspartate 131, histidine 134, and glutamate 146 together coordinate Zn(2+).

This sequence belongs to the COQ4 family. Component of a multi-subunit COQ enzyme complex. Zn(2+) is required as a cofactor.

Its subcellular location is the mitochondrion inner membrane. It catalyses the reaction a 4-hydroxy-3-methoxy-5-(all-trans-polyprenyl)benzoate + H(+) = a 2-methoxy-6-(all-trans-polyprenyl)phenol + CO2. Its pathway is cofactor biosynthesis; ubiquinone biosynthesis. Lyase that catalyzes the C1-decarboxylation of 4-hydroxy-3-methoxy-5-(all-trans-polyprenyl)benzoic acid into 2-methoxy-6-(all-trans-polyprenyl)phenol during ubiquinone biosynthesis. The polypeptide is Ubiquinone biosynthesis protein COQ4 homolog 2, mitochondrial (Trypanosoma cruzi (strain CL Brener)).